A 695-amino-acid polypeptide reads, in one-letter code: uncharacterized protein (695 aa).

Disordered stretches follow at residues 1–112 (MSRL…KHKK) and 242–262 (MKKV…NNDH). Positions 32 to 47 (DSSSSSDSPNFFPSSS) are enriched in low complexity. The segment covering 96 to 107 (KTEKEKEKEPIQ) has biased composition (basic and acidic residues). Residues 278-492 (KPRTKLLLLG…KIDKEADTNH (215 aa)) enclose the tr-type G domain. GTP is bound by residues 287–294 (GPPKSGKK), 357–361 (IFTTN), and 417–420 (TKMD).

This sequence belongs to the TRAFAC class translation factor GTPase superfamily. Classic translation factor GTPase family.

Its subcellular location is the cytoplasm. It is found in the nucleus. This is an uncharacterized protein from Schizosaccharomyces pombe (strain 972 / ATCC 24843) (Fission yeast).